A 313-amino-acid polypeptide reads, in one-letter code: Acetaldehyde dehydrogenase 3 (313 aa).

An NAD(+)-binding site is contributed by 11–14; sequence SGNI. Cys129 acts as the Acyl-thioester intermediate in catalysis. NAD(+) contacts are provided by residues 160–168 and Asn288; that span reads SAGPGTRAN.

This sequence belongs to the acetaldehyde dehydrogenase family.

It carries out the reaction acetaldehyde + NAD(+) + CoA = acetyl-CoA + NADH + H(+). This chain is Acetaldehyde dehydrogenase 3, found in Rhizorhabdus wittichii (strain DSM 6014 / CCUG 31198 / JCM 15750 / NBRC 105917 / EY 4224 / RW1) (Sphingomonas wittichii).